Consider the following 145-residue polypeptide: NADH-quinone oxidoreductase subunit A 1 (145 aa).

3 helical membrane passes run 18-38, 71-91, and 104-124; these read ILPL…LLLA, VPFY…VFIF, and GLIH…WLWL.

It belongs to the complex I subunit 3 family. As to quaternary structure, NDH-1 is composed of 14 different subunits. Subunits NuoA, H, J, K, L, M, N constitute the membrane sector of the complex.

It localises to the cell inner membrane. It catalyses the reaction a quinone + NADH + 5 H(+)(in) = a quinol + NAD(+) + 4 H(+)(out). Its function is as follows. NDH-1 shuttles electrons from NADH, via FMN and iron-sulfur (Fe-S) centers, to quinones in the respiratory chain. The immediate electron acceptor for the enzyme in this species is believed to be ubiquinone. Couples the redox reaction to proton translocation (for every two electrons transferred, four hydrogen ions are translocated across the cytoplasmic membrane), and thus conserves the redox energy in a proton gradient. This Geotalea uraniireducens (strain Rf4) (Geobacter uraniireducens) protein is NADH-quinone oxidoreductase subunit A 1.